We begin with the raw amino-acid sequence, 525 residues long: GMP synthase [glutamine-hydrolyzing] (525 aa).

The region spanning 9–207 is the Glutamine amidotransferase type-1 domain; that stretch reads RILILDFGSQ…VLDICQCEAL (199 aa). The Nucleophile role is filled by Cys86. Active-site residues include His181 and Glu183. One can recognise a GMPS ATP-PPase domain in the interval 208–400; that stretch reads WTPATIIEDA…LGLPYDMLFR (193 aa). Residue 235–241 coordinates ATP; sequence SGGVDSS.

Homodimer.

The enzyme catalyses XMP + L-glutamine + ATP + H2O = GMP + L-glutamate + AMP + diphosphate + 2 H(+). The protein operates within purine metabolism; GMP biosynthesis; GMP from XMP (L-Gln route): step 1/1. In terms of biological role, catalyzes the synthesis of GMP from XMP. The sequence is that of GMP synthase [glutamine-hydrolyzing] from Serratia proteamaculans (strain 568).